Here is a 228-residue protein sequence, read N- to C-terminus: Adapter protein MecA (228 aa).

Belongs to the MecA family. In terms of assembly, homodimer.

Functionally, enables the recognition and targeting of unfolded and aggregated proteins to the ClpC protease or to other proteins involved in proteolysis. This Lacticaseibacillus paracasei (strain ATCC 334 / BCRC 17002 / CCUG 31169 / CIP 107868 / KCTC 3260 / NRRL B-441) (Lactobacillus paracasei) protein is Adapter protein MecA.